We begin with the raw amino-acid sequence, 455 residues long: Tumor necrosis factor receptor superfamily member 1A (455 aa).

An N-terminal signal peptide occupies residues 1–29; sequence MGLSTVPDLLLPLVLLELLVGIYPSGVIG. At 30–211 the chain is on the extracellular side; sequence LVPHLGDREK…VKGTEDSGTT (182 aa). TNFR-Cys repeat units follow at residues 43 to 82, 83 to 125, 126 to 166, and 167 to 196; these read VCPQ…TDCR, ECES…DTVC, GCRK…NTVC, and TCHA…KLCL. Cystine bridges form between C44–C58, C59–C72, C62–C81, C84–C99, C102–C117, C105–C125, and C127–C143. Residue N54 is glycosylated (N-linked (GlcNAc...) asparagine). Residues N145 and N151 are each glycosylated (N-linked (GlcNAc...) asparagine). 5 disulfide bridges follow: C146–C158, C149–C166, C168–C179, C182–C195, and C185–C191. Residues 212-232 form a helical membrane-spanning segment; the sequence is VLLPLVIFFGLCLLSLLFIGL. Topologically, residues 233–455 are cytoplasmic; it reads MYRYQRWKSK…ALPPAPSLLR (223 aa). A disordered region spans residues 254–273; the sequence is EKEGELEGTTTKPLAPNPSF. The interval 338–348 is N-SMase activation domain (NSD); the sequence is LQKWEDSAHKP. The Death domain occupies 356 to 441; that stretch reads PATLYAVVEN…GCLEDIEEAL (86 aa). R376 is a glycosylation site ((Microbial infection) N-beta-linked (GlcNAc) arginine).

In terms of assembly, binding of TNF to the extracellular domain leads to homotrimerization. The aggregated death domains provide a novel molecular interface that interacts specifically with the death domain of TRADD. Various TRADD-interacting proteins such as TRAFS, RIPK1 and possibly FADD, are recruited to the complex by their association with TRADD. This complex activates at least two distinct signaling cascades, apoptosis and NF-kappa-B signaling. Interacts with BAG4, BABAM2, FEM1B, GRB2, SQSTM1 and TRPC4AP. Interacts directly with NOL3 (via CARD domain); inhibits TNF-signaling pathway. Interacts with SH3RF2, TRADD and RIPK1. SH3RF2 facilitates the recruitment of RIPK1 and TRADD to TNFRSF1A in a TNF-alpha-dependent process. Interacts with PGLYRP1; this interaction is important for cell death induction. Interacts (via death domain) with MADD (via death domain). (Microbial infection) Interacts with mumps virus protein SH; this interaction inhibits downstream NF-kappa-B pathway activation. As to quaternary structure, (Microbial infection) Interacts with HCV core protein. In terms of assembly, (Microbial infection) Interacts with human cytomegalovirus/HHV-5 protein UL138. (Microbial infection) Interacts with host TNFRSF1A; this interaction leads to the stimulation of both surface expression and shedding of TNFRSF1A. Post-translationally, the soluble form is produced from the membrane form by proteolytic processing. In terms of processing, (Microbial infection) Glycosylated at Arg-376 by enteropathogenic E.coli protein NleB1 and S.typhimurium protein Ssek3: arginine GlcNAcylation prevents homotypic/heterotypic death domain interactions.

The protein localises to the cell membrane. It is found in the golgi apparatus membrane. It localises to the secreted. In terms of biological role, receptor for TNFSF2/TNF-alpha and homotrimeric TNFSF1/lymphotoxin-alpha. The adapter molecule FADD recruits caspase-8 to the activated receptor. The resulting death-inducing signaling complex (DISC) performs caspase-8 proteolytic activation which initiates the subsequent cascade of caspases (aspartate-specific cysteine proteases) mediating apoptosis. Contributes to the induction of non-cytocidal TNF effects including anti-viral state and activation of the acid sphingomyelinase. The polypeptide is Tumor necrosis factor receptor superfamily member 1A (TNFRSF1A) (Homo sapiens (Human)).